A 347-amino-acid chain; its full sequence is Probable dual-specificity RNA methyltransferase RlmN (347 aa).

Glutamate 93 (proton acceptor) is an active-site residue. In terms of domain architecture, Radical SAM core spans 100–323; sequence KAKRKTACVS…KKAGLNISTR (224 aa). An intrachain disulfide couples cysteine 107 to cysteine 334. Positions 114, 118, and 121 each coordinate [4Fe-4S] cluster. S-adenosyl-L-methionine contacts are provided by residues 160-161, serine 192, 215-217, and asparagine 291; these read GE and SLT. The active-site S-methylcysteine intermediate is the cysteine 334.

This sequence belongs to the radical SAM superfamily. RlmN family. [4Fe-4S] cluster serves as cofactor.

The protein resides in the cytoplasm. The catalysed reaction is adenosine(2503) in 23S rRNA + 2 reduced [2Fe-2S]-[ferredoxin] + 2 S-adenosyl-L-methionine = 2-methyladenosine(2503) in 23S rRNA + 5'-deoxyadenosine + L-methionine + 2 oxidized [2Fe-2S]-[ferredoxin] + S-adenosyl-L-homocysteine. The enzyme catalyses adenosine(37) in tRNA + 2 reduced [2Fe-2S]-[ferredoxin] + 2 S-adenosyl-L-methionine = 2-methyladenosine(37) in tRNA + 5'-deoxyadenosine + L-methionine + 2 oxidized [2Fe-2S]-[ferredoxin] + S-adenosyl-L-homocysteine. In terms of biological role, specifically methylates position 2 of adenine 2503 in 23S rRNA and position 2 of adenine 37 in tRNAs. This chain is Probable dual-specificity RNA methyltransferase RlmN, found in Treponema denticola (strain ATCC 35405 / DSM 14222 / CIP 103919 / JCM 8153 / KCTC 15104).